Here is a 105-residue protein sequence, read N- to C-terminus: Large ribosomal subunit protein uL24 (105 aa).

This sequence belongs to the universal ribosomal protein uL24 family. Part of the 50S ribosomal subunit.

Functionally, one of two assembly initiator proteins, it binds directly to the 5'-end of the 23S rRNA, where it nucleates assembly of the 50S subunit. In terms of biological role, one of the proteins that surrounds the polypeptide exit tunnel on the outside of the subunit. The polypeptide is Large ribosomal subunit protein uL24 (Methylobacterium sp. (strain 4-46)).